The primary structure comprises 757 residues: RNA-directed RNA polymerase catalytic subunit (757 aa).

Positions 50 to 82 (SEKGKWTTNTETGAPQLNPIDGPLPEDNEPSGY) are disordered. Positions 55–64 (WTTNTETGAP) are enriched in polar residues. 2 short sequence motifs (nuclear localization signal) span residues 187–195 (RKRRVRDNM) and 203–216 (RTIGKKKQRVNKRS). The interval 249–256 (RGFVYFVE) is promoter-binding site. In terms of domain architecture, RdRp catalytic spans 286-483 (VRKMMTNSQD…GINMSKKKSY (198 aa)).

Belongs to the influenza viruses polymerase PB1 family. As to quaternary structure, influenza RNA polymerase is composed of three subunits: PB1, PB2 and PA. Interacts (via N-terminus) with PA (via C-terminus). Interacts (via C-terminus) with PB2 (via N-terminus); this interaction is essential for transcription initiation. Post-translationally, phosphorylated by host PRKCA.

The protein localises to the host nucleus. The protein resides in the host cytoplasm. It carries out the reaction RNA(n) + a ribonucleoside 5'-triphosphate = RNA(n+1) + diphosphate. In terms of biological role, RNA-dependent RNA polymerase which is responsible for replication and transcription of virus RNA segments. The transcription of viral mRNAs occurs by a unique mechanism called cap-snatching. 5' methylated caps of cellular mRNAs are cleaved after 10-13 nucleotides by PA. In turn, these short capped RNAs are used as primers by PB1 for transcription of viral mRNAs. During virus replication, PB1 initiates RNA synthesis and copy vRNA into complementary RNA (cRNA) which in turn serves as a template for the production of more vRNAs. The chain is RNA-directed RNA polymerase catalytic subunit from Influenza A virus (strain A/Port Chalmers/1/1973 H3N2).